The sequence spans 137 residues: Transcription antitermination protein NusB (137 aa).

The protein belongs to the NusB family.

Its function is as follows. Involved in transcription antitermination. Required for transcription of ribosomal RNA (rRNA) genes. Binds specifically to the boxA antiterminator sequence of the ribosomal RNA (rrn) operons. This is Transcription antitermination protein NusB from Borreliella afzelii (strain PKo) (Borrelia afzelii).